Reading from the N-terminus, the 322-residue chain is MRVVLGPMEGVLDHLMRQILTEINDYDLCVTEFVRVIDQVLPDHVFHRLCPELMQGSQTTSGVPVHVQLLGQEPHWMAENAIRAAELGARGIDLNFGCPAKMVNKSKGGAALLQHPELIHSVVKACRDAVPANIPVSAKIRLGWENPEDCFEIVDAIQSAGANELTVHARTKQGGYKASEIKWEYINKIRERFSIPLIANGEIWNFEDGQRCIETTGVDSLMVCRGAFNIPNLGNMVKHNHTPMVWSDVVDLLIYYSKFEMKGDKGLYYPNRVKQWFAYLRQSYPEANELFREIRTFNKAAPIVEHIQRYRDELQSRQSQVA.

FMN contacts are provided by residues 7-9 and glutamine 68; that span reads PME. The active-site Proton donor is cysteine 98. FMN contacts are provided by residues lysine 139, 200-202, and 224-225; these read NGE and CR.

The protein belongs to the Dus family. DusC subfamily. FMN serves as cofactor.

It carries out the reaction 5,6-dihydrouridine(16) in tRNA + NADP(+) = uridine(16) in tRNA + NADPH + H(+). The enzyme catalyses 5,6-dihydrouridine(16) in tRNA + NAD(+) = uridine(16) in tRNA + NADH + H(+). Its function is as follows. Catalyzes the synthesis of 5,6-dihydrouridine (D), a modified base found in the D-loop of most tRNAs, via the reduction of the C5-C6 double bond in target uridines. Specifically modifies U16 in tRNAs. The protein is tRNA-dihydrouridine(16) synthase of Vibrio parahaemolyticus serotype O3:K6 (strain RIMD 2210633).